Here is a 199-residue protein sequence, read N- to C-terminus: MRIILLGPPGAGKGTQSARIVEQFGIPQLSTGDMLRAAVAARTPVGLQAKSIMESGGLVPDEVVVGIVADRIDEADARKGFILDGFPRTVAQAKALDAMLAAKGLSLDAVIEFRVDEEALLGRIAKRAAETLARGEAVRKDDTPEVFKTRLDAYRSQTAPVSDYYAQTGLLRPIDGMAPIDDVSRAVEVLLRGLQPVSA.

Residue 10-15 (GAGKGT) coordinates ATP. Residues 30–59 (STGDMLRAAVAARTPVGLQAKSIMESGGLV) are NMP. AMP-binding positions include threonine 31, arginine 36, 57–59 (GLV), 85–88 (GFPR), and glutamine 92. The segment at 126–142 (KRAAETLARGEAVRKDD) is LID. Position 127 (arginine 127) interacts with ATP. Residues arginine 139 and arginine 150 each contribute to the AMP site. Alanine 178 provides a ligand contact to ATP.

Belongs to the adenylate kinase family. In terms of assembly, monomer.

The protein localises to the cytoplasm. It catalyses the reaction AMP + ATP = 2 ADP. It functions in the pathway purine metabolism; AMP biosynthesis via salvage pathway; AMP from ADP: step 1/1. Its function is as follows. Catalyzes the reversible transfer of the terminal phosphate group between ATP and AMP. Plays an important role in cellular energy homeostasis and in adenine nucleotide metabolism. This is Adenylate kinase from Methylobacterium nodulans (strain LMG 21967 / CNCM I-2342 / ORS 2060).